Here is a 246-residue protein sequence, read N- to C-terminus: Biosynthetic peptidoglycan transglycosylase (246 aa).

A helical membrane pass occupies residues 20-42 (SLRWVLAAPLLFAAASVLQVLAL).

This sequence belongs to the glycosyltransferase 51 family.

The protein localises to the cell inner membrane. The enzyme catalyses [GlcNAc-(1-&gt;4)-Mur2Ac(oyl-L-Ala-gamma-D-Glu-L-Lys-D-Ala-D-Ala)](n)-di-trans,octa-cis-undecaprenyl diphosphate + beta-D-GlcNAc-(1-&gt;4)-Mur2Ac(oyl-L-Ala-gamma-D-Glu-L-Lys-D-Ala-D-Ala)-di-trans,octa-cis-undecaprenyl diphosphate = [GlcNAc-(1-&gt;4)-Mur2Ac(oyl-L-Ala-gamma-D-Glu-L-Lys-D-Ala-D-Ala)](n+1)-di-trans,octa-cis-undecaprenyl diphosphate + di-trans,octa-cis-undecaprenyl diphosphate + H(+). Its pathway is cell wall biogenesis; peptidoglycan biosynthesis. Its function is as follows. Peptidoglycan polymerase that catalyzes glycan chain elongation from lipid-linked precursors. This Xanthomonas campestris pv. campestris (strain 8004) protein is Biosynthetic peptidoglycan transglycosylase.